We begin with the raw amino-acid sequence, 505 residues long: 2,3-bisphosphoglycerate-independent phosphoglycerate mutase (505 aa).

Mn(2+) contacts are provided by Asp11 and Ser61. The active-site Phosphoserine intermediate is Ser61. Substrate-binding positions include His122, 152 to 153 (RD), Arg184, Arg190, 258 to 261 (RPDR), and Lys331. Mn(2+)-binding residues include Asp396, His400, Asp437, His438, and His455.

The protein belongs to the BPG-independent phosphoglycerate mutase family. Monomer. The cofactor is Mn(2+).

It catalyses the reaction (2R)-2-phosphoglycerate = (2R)-3-phosphoglycerate. It functions in the pathway carbohydrate degradation; glycolysis; pyruvate from D-glyceraldehyde 3-phosphate: step 3/5. Catalyzes the interconversion of 2-phosphoglycerate and 3-phosphoglycerate. This chain is 2,3-bisphosphoglycerate-independent phosphoglycerate mutase, found in Mesomycoplasma hyopneumoniae (strain 7448) (Mycoplasma hyopneumoniae).